The chain runs to 431 residues: Peptidase B (431 aa).

Residues Lys-196 and Asp-201 each contribute to the Mn(2+) site. Lys-208 is a catalytic residue. Positions 219, 278, and 280 each coordinate Mn(2+). The active site involves Arg-282.

This sequence belongs to the peptidase M17 family. In terms of assembly, homohexamer. Mn(2+) serves as cofactor.

The protein resides in the cytoplasm. The enzyme catalyses Release of an N-terminal amino acid, Xaa, from a peptide or arylamide. Xaa is preferably Glu or Asp but may be other amino acids, including Leu, Met, His, Cys and Gln.. Probably plays an important role in intracellular peptide degradation. The polypeptide is Peptidase B (Photorhabdus laumondii subsp. laumondii (strain DSM 15139 / CIP 105565 / TT01) (Photorhabdus luminescens subsp. laumondii)).